A 623-amino-acid chain; its full sequence is Membralin-like protein At1g60995 (623 aa).

A helical transmembrane segment spans residues Gly24–Met44. Residues Ser99–Thr119 are disordered. Transmembrane regions (helical) follow at residues Gly315–Leu335, Ile363–Phe383, Leu392–Val412, and Phe424–Ser444. Disordered stretches follow at residues Asn506–Ala567 and Glu602–Asp623. The segment covering Pro514 to Phe531 has biased composition (polar residues).

Belongs to the membralin family.

It is found in the membrane. This is Membralin-like protein At1g60995 from Arabidopsis thaliana (Mouse-ear cress).